A 510-amino-acid chain; its full sequence is Cytochrome P450 monooxygenase btcC (510 aa).

The helical transmembrane segment at 1 to 21 threads the bilayer; sequence MSFPGVIFVVSFFPLLMGIAV. Cys446 contributes to the heme binding site.

The protein belongs to the cytochrome P450 family. Requires heme as cofactor.

It is found in the membrane. The protein operates within secondary metabolite biosynthesis; terpenoid biosynthesis. Its function is as follows. Cytochrome P450 monooxygenase; part of the gene cluster that mediates the biosynthesis of betaestacins. The bifunctional terpene synthase btcA converts isopentenyl diphosphate (IPP) and dimethylallyl diphosphate (DMAPP) into the sesterterpene betaestacin I. The C-terminal prenyltransferase (PT) domain of btcA catalyzes formation of GFPP, whereas the N-terminal terpene cyclase (TC) domain catalyzes the cyclization of GFPP into betaestacin I. The cytochrome P450 monooxygenase btcB is then responsible for the six-step oxidation of betaestacin I to yield betaestacin II. The roles of the cytochrome P450 monooxygenase btcC and the alpha-ketoglutarate-dependent dioxygenase btcD have not been identified yet. The sequence is that of Cytochrome P450 monooxygenase btcC from Neocamarosporium betae (Beet black rot fungus).